The primary structure comprises 113 residues: Large ribosomal subunit protein bL19 (113 aa).

The protein belongs to the bacterial ribosomal protein bL19 family.

In terms of biological role, this protein is located at the 30S-50S ribosomal subunit interface and may play a role in the structure and function of the aminoacyl-tRNA binding site. The polypeptide is Large ribosomal subunit protein bL19 (Nocardia farcinica (strain IFM 10152)).